Here is a 387-residue protein sequence, read N- to C-terminus: Acetate kinase (387 aa).

Asparagine 14 contacts Mg(2+). Lysine 21 lines the ATP pocket. Arginine 80 is a binding site for substrate. Residue aspartate 137 is the Proton donor/acceptor of the active site. ATP contacts are provided by residues 197-201, 271-273, and 319-323; these read HLGNG, DFR, and GIGEN. Glutamate 373 is a binding site for Mg(2+).

This sequence belongs to the acetokinase family. As to quaternary structure, homodimer. Requires Mg(2+) as cofactor. Mn(2+) is required as a cofactor.

It localises to the cytoplasm. It carries out the reaction acetate + ATP = acetyl phosphate + ADP. It functions in the pathway metabolic intermediate biosynthesis; acetyl-CoA biosynthesis; acetyl-CoA from acetate: step 1/2. Its function is as follows. Catalyzes the formation of acetyl phosphate from acetate and ATP. Can also catalyze the reverse reaction. In Mycobacterium avium (strain 104), this protein is Acetate kinase.